Reading from the N-terminus, the 362-residue chain is Biotin synthase (362 aa).

The segment at 14–39 is disordered; that stretch reads AQRTPEPLPPTSQGLARPSHDVVRGP. Positions 87–316 constitute a Radical SAM core domain; it reads HKGGPAALCG…ARDILVCGGR (230 aa). [4Fe-4S] cluster is bound by residues Cys105, Cys109, and Cys112. [2Fe-2S] cluster is bound by residues Cys181 and Cys241.

Belongs to the radical SAM superfamily. Biotin synthase family. As to quaternary structure, homodimer. It depends on [4Fe-4S] cluster as a cofactor. [2Fe-2S] cluster serves as cofactor.

It carries out the reaction (4R,5S)-dethiobiotin + (sulfur carrier)-SH + 2 reduced [2Fe-2S]-[ferredoxin] + 2 S-adenosyl-L-methionine = (sulfur carrier)-H + biotin + 2 5'-deoxyadenosine + 2 L-methionine + 2 oxidized [2Fe-2S]-[ferredoxin]. The protein operates within cofactor biosynthesis; biotin biosynthesis; biotin from 7,8-diaminononanoate: step 2/2. Its function is as follows. Catalyzes the conversion of dethiobiotin (DTB) to biotin by the insertion of a sulfur atom into dethiobiotin via a radical-based mechanism. The chain is Biotin synthase from Nitratidesulfovibrio vulgaris (strain ATCC 29579 / DSM 644 / CCUG 34227 / NCIMB 8303 / VKM B-1760 / Hildenborough) (Desulfovibrio vulgaris).